The chain runs to 82 residues: Nuclear protein 1 (82 aa).

Positions 1-82 (MATFPPATSA…SERKKRGARR (82 aa)) are disordered. Over residues 17–28 (PEDEDSSLDESD) the composition is skewed to acidic residues. The short motif at 65–82 (KLVTKLQNSERKKRGARR) is the Nuclear localization signal element.

The protein belongs to the NUPR family. As to quaternary structure, monomer. Directly interacts with MSL1 and binds MORF4L1, two components of histone acetyltransferase complex; the interaction with MORF4L1 may be mediated by MSL1. Interacts with EP300; this interaction enhances the effect of EP300 on PAX2 transcription factor activity. Interacts with PAXIP1; this interaction prevents PAXIP1 inhibition of PAX2 transcription factor activity. Interacts with COPS5; this interaction allows COPS5-dependent CDKN1B nuclear to cytoplasm translocation. Interacts with RNF2. Interacts with FOXO3; this interaction represses FOXO3 transactivation. Interacts with PTMA; negatively regulates apoptotic process. Interacts with MYOD1, EP300 and DDX5; this interaction coordinates the association of anti-proliferative and pro-myogenic proteins at the myogenin promoter. Interacts with TP53; interaction is stress-dependent. Forms a complex with EP300 and TP53; this complex binds CDKN1A promoter leading to transcriptional induction of CDKN1A. Post-translationally, phosphorylated in vitro by PKA and CK. Phosphorylation promotes DNA-binding activity. Acetylated by EP300 in vitro. As to expression, widely expressed, with high levels in liver, pancreas, prostate, ovary, colon, thyroid, spinal cord, trachea and adrenal gland, moderate levels in heart, placenta, lung, skeletal muscle, kidney, testis, small intestine, stomach and lymph node, and low levels in brain, spleen, thymus and bone marrow. Not detected in peripheral blood leukocytes.

Its subcellular location is the nucleus. The protein resides in the cytoplasm. The protein localises to the perinuclear region. In terms of biological role, transcription regulator that converts stress signals into a program of gene expression that empowers cells with resistance to the stress induced by a change in their microenvironment. Thereby participates in the regulation of many processes namely cell-cycle, apoptosis, autophagy and DNA repair responses. Controls cell cycle progression and protects cells from genotoxic stress induced by doxorubicin through the complex formation with TP53 and EP300 that binds CDKN1A promoter leading to transcriptional induction of CDKN1A. Protects pancreatic cancer cells from stress-induced cell death by binding the RELB promoter and activating its transcription, leading to IER3 transactivation. Negatively regulates apoptosis through interaction with PTMA. Inhibits autophagy-induced apoptosis in cardiac cells through FOXO3 interaction, inducing cytoplasmic translocation of FOXO3 thereby preventing the FOXO3 association with the pro-autophagic BNIP3 promoter. Inhibits cell growth and facilitates programmed cell death by apoptosis after adriamycin-induced DNA damage through transactivation of TP53. Regulates methamphetamine-induced apoptosis and autophagy through DDIT3-mediated endoplasmic reticulum stress pathway. Participates in DNA repair following gamma-irradiation by facilitating DNA access of the transcription machinery through interaction with MSL1 leading to inhibition of histone H4' Lys-16' acetylation (H4K16ac). Coactivator of PAX2 transcription factor activity, both by recruiting EP300 to increase PAX2 transcription factor activity and by binding PAXIP1 to suppress PAXIP1-induced inhibition on PAX2. Positively regulates cell cycle progression through interaction with COPS5 inducing cytoplasmic translocation of CDKN1B leading to the CDKN1B degradation. Coordinates, through its interaction with EP300, the assiociation of MYOD1, EP300 and DDX5 to the MYOG promoter, leading to inhibition of cell-cycle progression and myogenic differentiation promotion. Negatively regulates beta cell proliferation via inhibition of cell-cycle regulatory genes expression through the suppression of their promoter activities. Also required for LHB expression and ovarian maturation. Exacerbates CNS inflammation and demyelination upon cuprizone treatment. The polypeptide is Nuclear protein 1 (Homo sapiens (Human)).